Here is a 320-residue protein sequence, read N- to C-terminus: Acyl-coenzyme A thioesterase 8 (320 aa).

Residues D233, S255, and Q305 each act as charge relay system in the active site. The Microbody targeting signal motif lies at 318–320 (SKL).

Belongs to the C/M/P thioester hydrolase family. Homodimer. In terms of tissue distribution, ubiquitous.

The protein resides in the peroxisome matrix. The catalysed reaction is choloyl-CoA + H2O = cholate + CoA + H(+). The enzyme catalyses chenodeoxycholoyl-CoA + H2O = chenodeoxycholate + CoA + H(+). It catalyses the reaction acetyl-CoA + H2O = acetate + CoA + H(+). It carries out the reaction malonyl-CoA + H2O = malonate + CoA + H(+). The catalysed reaction is acetoacetyl-CoA + H2O = acetoacetate + CoA + H(+). The enzyme catalyses propanoyl-CoA + H2O = propanoate + CoA + H(+). It catalyses the reaction butanoyl-CoA + H2O = butanoate + CoA + H(+). It carries out the reaction succinyl-CoA + H2O = succinate + CoA + H(+). The catalysed reaction is glutaryl-CoA + H2O = glutarate + CoA + H(+). The enzyme catalyses hexanoyl-CoA + H2O = hexanoate + CoA + H(+). It catalyses the reaction hexanedioyl-CoA + H2O = hexanedioate + CoA + H(+). It carries out the reaction octanoyl-CoA + H2O = octanoate + CoA + H(+). The catalysed reaction is octanedioyl-CoA + H2O = octanedioate + CoA + H(+). The enzyme catalyses decanoyl-CoA + H2O = decanoate + CoA + H(+). It catalyses the reaction decanedioyl-CoA + H2O = decanedioate + CoA + H(+). It carries out the reaction dodecanoyl-CoA + H2O = dodecanoate + CoA + H(+). The catalysed reaction is dodecanedioyl-CoA + H2O = dodecanedioate + CoA + H(+). The enzyme catalyses tetradecanoyl-CoA + H2O = tetradecanoate + CoA + H(+). It catalyses the reaction (9Z)-tetradecenoyl-CoA + H2O = (9Z)-tetradecenoate + CoA + H(+). It carries out the reaction hexadecanoyl-CoA + H2O = hexadecanoate + CoA + H(+). The catalysed reaction is (9Z)-hexadecenoyl-CoA + H2O = (9Z)-hexadecenoate + CoA + H(+). The enzyme catalyses octadecanoyl-CoA + H2O = octadecanoate + CoA + H(+). It catalyses the reaction (9Z)-octadecenoyl-CoA + H2O = (9Z)-octadecenoate + CoA + H(+). It carries out the reaction (9Z,12Z)-octadecadienoyl-CoA + H2O = (9Z,12Z)-octadecadienoate + CoA + H(+). The catalysed reaction is eicosanoyl-CoA + H2O = eicosanoate + CoA + H(+). The enzyme catalyses (5Z,8Z,11Z,14Z)-eicosatetraenoyl-CoA + H2O = (5Z,8Z,11Z,14Z)-eicosatetraenoate + CoA + H(+). It catalyses the reaction 4,8-dimethylnonanoyl-CoA + H2O = 4,8-dimethylnonanoate + CoA + H(+). It carries out the reaction 2,6-dimethylheptanoyl-CoA + H2O = 2,6-dimethylheptanoate + CoA + H(+). The catalysed reaction is (3S)-3-hydroxy-3-methylglutaryl-CoA + H2O = 3-hydroxy-3-methylglutarate + CoA + H(+). The enzyme catalyses 3alpha,7alpha,12alpha-trihydroxy-5beta-cholestan-26-oyl-CoA + H2O = 3alpha,7alpha,12alpha-trihydroxy-5beta-cholestan-26-oate + CoA + H(+). It catalyses the reaction 2-methyloctadecanoyl-CoA + H2O = 2-methyloctadecanoate + CoA + H(+). It carries out the reaction prostaglandin F2alpha-CoA + H2O = prostaglandin F2alpha + CoA + H(+). Its pathway is lipid metabolism; fatty acid metabolism. Its activity is regulated as follows. Inhibited by CoASH (IC(50)=10-15 uM). Also inhibited by cysteine-reactive agents. Its function is as follows. Catalyzes the hydrolysis of acyl-CoAs into free fatty acids and coenzyme A (CoASH), regulating their respective intracellular levels. Displays no strong substrate specificity with respect to the carboxylic acid moiety of Acyl-CoAs. Hydrolyzes medium length (C2 to C20) straight-chain, saturated and unsaturated acyl-CoAS but is inactive towards substrates with longer aliphatic chains. Moreover, it catalyzes the hydrolysis of CoA esters of bile acids, such as choloyl-CoA and chenodeoxycholoyl-CoA and competes with bile acid CoA:amino acid N-acyltransferase (BAAT). Is also able to hydrolyze CoA esters of dicarboxylic acids. It is involved in the metabolic regulation of peroxisome proliferation. In Mus musculus (Mouse), this protein is Acyl-coenzyme A thioesterase 8 (Acot8).